We begin with the raw amino-acid sequence, 584 residues long: Arginine--tRNA ligase (584 aa).

The 'HIGH' region signature appears at 126-136 (PNIAKEMHVGH).

The protein belongs to the class-I aminoacyl-tRNA synthetase family. As to quaternary structure, monomer.

The protein resides in the cytoplasm. It catalyses the reaction tRNA(Arg) + L-arginine + ATP = L-arginyl-tRNA(Arg) + AMP + diphosphate. This is Arginine--tRNA ligase from Synechococcus sp. (strain ATCC 27144 / PCC 6301 / SAUG 1402/1) (Anacystis nidulans).